A 229-amino-acid chain; its full sequence is Dolichyldiphosphatase 1 (229 aa).

4 helical membrane passes run 27-47, 94-114, 120-140, and 156-176; these read LFNAYVTLIPIAIAIGVITLI, MPSSHSQFMFFFAVLMTLFYL, FGSKILPIISVTFLFFLAAGV, and FCGSFIGICLGFIWYGVIEYI.

This sequence belongs to the dolichyldiphosphatase family.

The protein resides in the endoplasmic reticulum membrane. It carries out the reaction a di-trans,poly-cis-dolichyl diphosphate + H2O = a di-trans,poly-cis-dolichyl phosphate + phosphate + H(+). It participates in protein modification; protein glycosylation. Required for efficient N-glycosylation. Necessary for maintaining optimal levels of dolichol-linked oligosaccharides. Hydrolyzes dolichyl pyrophosphate at a very high rate and dolichyl monophosphate at a much lower rate. Does not act on phosphatidate. The chain is Dolichyldiphosphatase 1 (dolpp1) from Dictyostelium discoideum (Social amoeba).